A 159-amino-acid polypeptide reads, in one-letter code: MNIKIIVVGKLKEKYLKQGIAEYSKRLSKFCKFQIIEVPDEKAPESLSDAQMNEVKVKEGERILGKIKDRDYVFTLEIKGKERSSEELSAEMAKLATYGNSDITFVIGGSLGLSDAVMKRSNSAISFGRFTLPHQLMRLVLTEQIYRSFMIQAGSPYHK.

Residues Leu-76 and Gly-108 each contribute to the S-adenosyl-L-methionine site.

The protein belongs to the RNA methyltransferase RlmH family. In terms of assembly, homodimer.

It localises to the cytoplasm. It catalyses the reaction pseudouridine(1915) in 23S rRNA + S-adenosyl-L-methionine = N(3)-methylpseudouridine(1915) in 23S rRNA + S-adenosyl-L-homocysteine + H(+). Functionally, specifically methylates the pseudouridine at position 1915 (m3Psi1915) in 23S rRNA. The protein is Ribosomal RNA large subunit methyltransferase H of Pediococcus pentosaceus (strain ATCC 25745 / CCUG 21536 / LMG 10740 / 183-1w).